A 358-amino-acid polypeptide reads, in one-letter code: Ribosomal RNA-processing protein 8 (358 aa).

The disordered stretch occupies residues 1–81 (MKPFEVPPWE…PQDSSDDDYE (81 aa)). Residues 30–44 (AKKKPKKKKPKKKKA) show a composition bias toward basic residues. Phosphoserine occurs at positions 75 and 76. S-adenosyl-L-methionine contacts are provided by H185, G220, D238, and C267.

The protein belongs to the methyltransferase superfamily. RRP8 family.

Its subcellular location is the nucleus. It localises to the nucleolus. In terms of biological role, probable methyltransferase required to silence rDNA. The chain is Ribosomal RNA-processing protein 8 from Drosophila melanogaster (Fruit fly).